Here is a 139-residue protein sequence, read N- to C-terminus: Small ribosomal subunit protein bS6 (139 aa).

A compositionally biased stretch (basic and acidic residues) spans 95 to 121 (AVTEQSEMLKAEESRNERRERRERPND). Residues 95–139 (AVTEQSEMLKAEESRNERRERRERPNDNAEGADGDDNSDSDNADE) form a disordered region. Over residues 124 to 139 (EGADGDDNSDSDNADE) the composition is skewed to acidic residues.

Belongs to the bacterial ribosomal protein bS6 family.

Functionally, binds together with bS18 to 16S ribosomal RNA. This chain is Small ribosomal subunit protein bS6, found in Pseudomonas aeruginosa (strain LESB58).